Reading from the N-terminus, the 379-residue chain is Flap endonuclease 1 (379 aa).

The segment at 1–105 (MGVKGLNQLI…GELEKRLLRR (105 aa)) is N-domain. Position 34 (Asp34) interacts with Mg(2+). The DNA site is built by Arg47 and Arg71. Residues Asp87, Glu159, Glu161, Asp180, and Asp182 each coordinate Mg(2+). An I-domain region spans residues 123 to 254 (DMVRYEKRTV…VTAFKLIKEH (132 aa)). Glu159 serves as a coordination point for DNA. The DNA site is built by Gly232 and Asp234. Mg(2+) is bound at residue Asp234. An interaction with PCNA region spans residues 341 to 349 (VQGRLDGFF). The interval 344–379 (RLDGFFQSVPKPKDSADKKRKNDTKSAKSKKAKTRK) is disordered. A compositionally biased stretch (basic residues) spans 361–379 (KKRKNDTKSAKSKKAKTRK).

This sequence belongs to the XPG/RAD2 endonuclease family. FEN1 subfamily. Interacts with PCNA. Three molecules of FEN1 bind to one PCNA trimer with each molecule binding to one PCNA monomer. PCNA stimulates the nuclease activity without altering cleavage specificity. Requires Mg(2+) as cofactor. In terms of processing, phosphorylated. Phosphorylation upon DNA damage induces relocalization to the nuclear plasma.

Its subcellular location is the nucleus. The protein resides in the nucleolus. The protein localises to the nucleoplasm. It is found in the mitochondrion. Structure-specific nuclease with 5'-flap endonuclease and 5'-3' exonuclease activities involved in DNA replication and repair. During DNA replication, cleaves the 5'-overhanging flap structure that is generated by displacement synthesis when DNA polymerase encounters the 5'-end of a downstream Okazaki fragment. It enters the flap from the 5'-end and then tracks to cleave the flap base, leaving a nick for ligation. Also involved in the long patch base excision repair (LP-BER) pathway, by cleaving within the apurinic/apyrimidinic (AP) site-terminated flap. Acts as a genome stabilization factor that prevents flaps from equilibrating into structures that lead to duplications and deletions. Also possesses 5'-3' exonuclease activity on nicked or gapped double-stranded DNA, and exhibits RNase H activity. Also involved in replication and repair of rDNA and in repairing mitochondrial DNA. This is Flap endonuclease 1 from Debaryomyces hansenii (strain ATCC 36239 / CBS 767 / BCRC 21394 / JCM 1990 / NBRC 0083 / IGC 2968) (Yeast).